A 70-amino-acid chain; its full sequence is Prokaryotic ubiquitin-like protein UBact (70 aa).

Composition is skewed to basic and acidic residues over residues 1-15 (MPDQRQQERSRRKQG) and 24-50 (TRHDPPPSEQESPVRRMLRDLRERDPG). Positions 1–70 (MPDQRQQERS…RQQRREQSGE (70 aa)) are disordered. Glu-70 participates in a covalent cross-link: Isoglutamyl lysine isopeptide (Glu-Lys) (interchain with K-? in acceptor proteins).

The protein belongs to the ubiquitin-like protein UBact family.

Its function is as follows. May function as a protein modifier covalently attached to lysine residues of substrate proteins. This may serve to target the modified proteins for degradation by proteasomes. In Terrybacteria sp. (strain RIFCSPHIGHO2_01_FULL_58_15), this protein is Prokaryotic ubiquitin-like protein UBact.